Consider the following 1071-residue polypeptide: Nonribosomal peptide synthetase flvI (1071 aa).

Residues 33–417 (RRVLEQHDAP…GSLHFISRKD (385 aa)) form an adenylation region. Positions 552-628 (MPLTEIELKM…MLCQNIKTDV (77 aa)) constitute a Carrier domain. At S589 the chain carries O-(pantetheine 4'-phosphoryl)serine. Residues 689–961 (NYTLRLEFKL…IDDRDIEQLS (273 aa)) are condensation.

It belongs to the NRP synthetase family.

It catalyses the reaction (2S)-5,5-dimethylpiperidine-2-carboxylate + 10-hydroxy-pre-flavunoidine + ATP = flavunoidine + AMP + diphosphate + H(+). It functions in the pathway secondary metabolite biosynthesis; terpenoid biosynthesis. Functionally, nonribosomal peptide synthetase; part of the gene cluster that mediates the biosynthesis of flavunoidine, an alkaloidal terpenoid with a tetracyclic cage-like core connected to dimethylcadaverine via a C-N bond and acylated with 5,5-dimethyl-L-pipecolate. The tetracyclic core is synthesized by the terpene cyclase flvE and the cytochrome P450 monooxygenase flvD. The terpene cyclase flvE catalyzes the cyclization of farnesyl pyrophosphate (FPP) to form (1R,4R,5S)-(+)-acoradiene and the cytochrome P450 monooxygenase flvD is then responsible for oxidative conversion of (1R,4R,5S)-(+)-acoradiene into the tetracyclic cage present in the final product flavunoidine. In parallel, the N-methyltransferase flvH dimethylates L-lysine to give N,N-dimethyl-L-Lysin which is decarboxylated by flvG to afford dimethylcadaverine. The terpene cyclase-like protein flvF is the enzyme that attaches the dimethylcadaverine precusor at the C-7 of the tetracyclic cage to yield pre-flavunoidine. The cytochrome monooxygenase flvC hydroxylates the C-10 position of pre-flavunoidine whereas the NRPS flvI acylates the terpenoid core at the hydroxylated C-10 with dimethylpipecolate to yield final flavunoidine. The bifunctional enzyme flvA and the dehydrogenase flvB are responsible for the synthesis of the dimethylpipecolate precursor. The PLP-dependent lyase domain of flvA might use L-O-acetyl-homoserine and alpha-keto-isovalerate to form an intermediary ketone that can cyclize intramolecularly to yield an imine. The imine can be reduced by flvB to yield the 6-carboxylated pipecolate. The C-terminal alpha-KG-dependent oxygenase domain of flvA is then proposed to catalyze the decarboxylation to yield dimethylpipecolate. The protein is Nonribosomal peptide synthetase flvI of Aspergillus flavus (strain ATCC 200026 / FGSC A1120 / IAM 13836 / NRRL 3357 / JCM 12722 / SRRC 167).